The chain runs to 1238 residues: Protein MMS22-like (1238 aa).

Belongs to the MMS22 family. MMS22L subfamily. Component of the MMS22L-TONSL complex, a complex at least composed of MMS22L and TONSL/NFKBIL2. Interacts with RAD51; interaction is direct. Degraded by the ubiquitin-proteasome system upon replication stress.

Its subcellular location is the nucleus. It localises to the chromosome. Functionally, component of the MMS22L-TONSL complex, a complex that promotes homologous recombination-mediated repair of double-strand breaks (DSBs) at stalled or collapsed replication forks. The MMS22L-TONSL complex is required to maintain genome integrity during DNA replication. It mediates the assembly of RAD51 filaments on single-stranded DNA (ssDNA): the MMS22L-TONSL complex is recruited to DSBs following histone replacement by histone chaperones and eviction of the replication protein A complex (RPA/RP-A) from DSBs. Following recruitment to DSBs, the TONSL-MMS22L complex promotes recruitment of RAD51 filaments and subsequent homologous recombination. Within the complex, MMS22L acts by binding ssDNA. The sequence is that of Protein MMS22-like (Mms22l) from Mus musculus (Mouse).